The following is a 257-amino-acid chain: Triosephosphate isomerase (257 aa).

N12 and K14 together coordinate substrate. H98 functions as the Electrophile in the catalytic mechanism. The active-site Proton acceptor is the E169.

This sequence belongs to the triosephosphate isomerase family. Homodimer.

The catalysed reaction is D-glyceraldehyde 3-phosphate = dihydroxyacetone phosphate. Its pathway is carbohydrate biosynthesis; gluconeogenesis. It participates in carbohydrate degradation; glycolysis; D-glyceraldehyde 3-phosphate from glycerone phosphate: step 1/1. The protein is Triosephosphate isomerase (tpiA) of Dictyostelium discoideum (Social amoeba).